The following is a 562-amino-acid chain: Probable malate:quinone oxidoreductase (562 aa).

A disordered region spans residues 535–562; it reads SATPADPTIAPKNQHSTTYNANSEMQAL. A compositionally biased stretch (polar residues) spans 545-562; it reads PKNQHSTTYNANSEMQAL.

It belongs to the MQO family. It depends on FAD as a cofactor.

The catalysed reaction is (S)-malate + a quinone = a quinol + oxaloacetate. Its pathway is carbohydrate metabolism; tricarboxylic acid cycle; oxaloacetate from (S)-malate (quinone route): step 1/1. The sequence is that of Probable malate:quinone oxidoreductase from Xylella fastidiosa (strain M23).